Here is a 349-residue protein sequence, read N- to C-terminus: Uroporphyrinogen decarboxylase (349 aa).

Residues 23–27 (RQAGR), D71, Y148, S203, and H317 contribute to the substrate site.

Belongs to the uroporphyrinogen decarboxylase family. Homodimer.

Its subcellular location is the cytoplasm. The enzyme catalyses uroporphyrinogen III + 4 H(+) = coproporphyrinogen III + 4 CO2. The protein operates within porphyrin-containing compound metabolism; protoporphyrin-IX biosynthesis; coproporphyrinogen-III from 5-aminolevulinate: step 4/4. Functionally, catalyzes the decarboxylation of four acetate groups of uroporphyrinogen-III to yield coproporphyrinogen-III. This Sorangium cellulosum (strain So ce56) (Polyangium cellulosum (strain So ce56)) protein is Uroporphyrinogen decarboxylase.